Here is a 140-residue protein sequence, read N- to C-terminus: Inner membrane protein YphA (140 aa).

Residues 1–13 (MNTLRYFDFGAAR) lie on the Cytoplasmic side of the membrane. A helical membrane pass occupies residues 14-34 (PVLLLIARIAVVLIFIIFGFP). The Periplasmic segment spans residues 35-56 (KMMGFDGTVQYMASLGAPMPML). A helical transmembrane segment spans residues 57–77 (AAIIAVVMEVPAAILIVLGFF). Topologically, residues 78–79 (TR) are cytoplasmic. A helical transmembrane segment spans residues 80 to 100 (PLAVLFIFYTLGTAVIGHHYW). Residues 101–116 (DMTGDAVGPNMINFWK) lie on the Periplasmic side of the membrane. Residues 117–137 (NVSIAGAFLLLAITGPGAISL) traverse the membrane as a helical segment. The Cytoplasmic portion of the chain corresponds to 138–140 (DRR).

This sequence belongs to the DoxX family.

It is found in the cell inner membrane. The polypeptide is Inner membrane protein YphA (yphA) (Escherichia coli (strain K12)).